Here is a 115-residue protein sequence, read N- to C-terminus: Replication initiation control protein YabA (115 aa).

H86, C88, C102, and C105 together coordinate Zn(2+).

This sequence belongs to the YabA family. Homotetramer. Interacts with both DnaA and DnaN, acting as a bridge between these two proteins. Zn(2+) is required as a cofactor.

It is found in the cytoplasm. Its subcellular location is the nucleoid. Functionally, involved in control of chromosome replication initiation. Inhibits the cooperative binding of DnaA to the oriC region, thus negatively regulating initiation of chromosome replication. Inhibits the ability of DnaA-ATP to form a helix on DNA; does not disassemble preformed DnaA-DNA helices. Decreases the residence time of DnaA on the chromosome at its binding sites (oriC, replication forks and promoter-binding sites). Tethers DnaA to the replication machinery via the DNA polymerase beta sliding clamp subunit (dnaN). Associates with oriC and other DnaA targets on the chromosome in a DnaA-dependent manner. The chain is Replication initiation control protein YabA from Enterococcus faecalis (strain ATCC 700802 / V583).